The following is a 567-amino-acid chain: Thiol:disulfide interchange protein DsbD (567 aa).

A signal peptide spans 1–19 (MAQRIFTLILLLCSTSAFA). 2 disulfide bridges follow: Cys-122/Cys-128 and Cys-185/Cys-307. A run of 8 helical transmembrane segments spans residues 166–186 (LPFS…TPCV), 210–230 (LLLA…LGLV), 246–266 (YVLI…FGLF), 299–319 (IAGL…LLYI), 326–346 (WLGG…LMLV), 360–380 (WMAH…VFLL), 387–407 (AWGL…AFIT), and 418–438 (IVQI…QDWA). The Thioredoxin domain maps to 435–567 (QDWAFGSPSA…FSAHLHDRQP (133 aa)). A disulfide bridge connects residues Cys-482 and Cys-485.

It belongs to the thioredoxin family. DsbD subfamily.

It localises to the cell inner membrane. The enzyme catalyses [protein]-dithiol + NAD(+) = [protein]-disulfide + NADH + H(+). It catalyses the reaction [protein]-dithiol + NADP(+) = [protein]-disulfide + NADPH + H(+). Functionally, required to facilitate the formation of correct disulfide bonds in some periplasmic proteins and for the assembly of the periplasmic c-type cytochromes. Acts by transferring electrons from cytoplasmic thioredoxin to the periplasm. This transfer involves a cascade of disulfide bond formation and reduction steps. This Salmonella choleraesuis (strain SC-B67) protein is Thiol:disulfide interchange protein DsbD.